Here is a 206-residue protein sequence, read N- to C-terminus: Emopamil-binding protein-like (206 aa).

Transmembrane regions (helical) follow at residues 10 to 30 (EAGSSLLLCSALLAVGCALGL), 42 to 62 (WVLAWLCYDSLVHFVLEGAFV), 101 to 121 (LEILTVVLDGLLALVLIYAIV), and 165 to 185 (LWVYLVFFNGLWVLIPGLLLW). An EXPERA domain is found at 39–184 (VERWVLAWLC…LWVLIPGLLL (146 aa)).

It belongs to the EBP family. In terms of assembly, homodimer.

It is found in the endoplasmic reticulum membrane. Its function is as follows. Does not possess sterol isomerase activity and does not bind sigma ligands. This Mus musculus (Mouse) protein is Emopamil-binding protein-like (Ebpl).